The chain runs to 247 residues: 2-amino-5-formylamino-6-ribosylaminopyrimidin-4(3H)-one 5'-monophosphate deformylase (247 aa).

Positions 41, 43, 52, and 121 each coordinate Fe cation.

Belongs to the creatininase superfamily. FAPy deformylase family. As to quaternary structure, homodimer. Fe(2+) is required as a cofactor. The cofactor is Zn(2+).

The enzyme catalyses 2-amino-5-formylamino-6-(5-phospho-D-ribosylamino)pyrimidin-4(3H)-one + H2O = 2,5-diamino-6-(1-D-ribosylamino)pyrimidin-4(3H)-one 5'-phosphate + formate + H(+). It participates in cofactor biosynthesis; coenzyme F420 biosynthesis. The protein operates within cofactor biosynthesis; riboflavin biosynthesis. In terms of biological role, catalyzes the hydrolysis of the formamide of 2-amino-5-formylamino-6-ribosylamino-4(3H)-pyrimidinone 5'-monophosphate (FAPy) to form 2,5-diamino-6-ribosylamino-4(3H)-pyrimidinone 5'-phosphate (APy). The protein is 2-amino-5-formylamino-6-ribosylaminopyrimidin-4(3H)-one 5'-monophosphate deformylase of Methanothermus fervidus (strain ATCC 43054 / DSM 2088 / JCM 10308 / V24 S).